Reading from the N-terminus, the 122-residue chain is Large ribosomal subunit protein bL17 (122 aa).

It belongs to the bacterial ribosomal protein bL17 family. In terms of assembly, part of the 50S ribosomal subunit. Contacts protein L32.

The polypeptide is Large ribosomal subunit protein bL17 (Staphylococcus aureus (strain Mu3 / ATCC 700698)).